We begin with the raw amino-acid sequence, 514 residues long: Bifunctional lysine-specific demethylase and histidyl-hydroxylase NO66 (514 aa).

The tract at residues 1–53 (MKRGLEEEIEEMSEEEVGVNNNNNGKKKKKKVVKKSKPVPLTKSVPQVSSQPL) is disordered. Residues 7-17 (EEIEEMSEEEV) show a composition bias toward acidic residues. Residues 25–37 (GKKKKKKVVKKSK) are compositionally biased toward basic residues. Residues 44 to 53 (SVPQVSSQPL) are compositionally biased toward polar residues. The 148-residue stretch at 180 to 327 (CSVRLLNPQT…IGKVLNRALE (148 aa)) folds into the JmjC domain. Residues H226, D228, and H291 each coordinate Fe cation.

It belongs to the ROX family. NO66 subfamily. Fe(2+) serves as cofactor.

It is found in the nucleus. The enzyme catalyses N(6),N(6)-dimethyl-L-lysyl(36)-[histone H3] + 2 2-oxoglutarate + 2 O2 = L-lysyl(36)-[histone H3] + 2 formaldehyde + 2 succinate + 2 CO2. In terms of biological role, oxygenase that can act as both a histone lysine demethylase and a ribosomal histidine hydroxylase. Specifically demethylates 'Lys-4' (H3K4me) and 'Lys-36' (H3K36me) of histone H3, thereby playing a central role in histone code. This Dictyostelium discoideum (Social amoeba) protein is Bifunctional lysine-specific demethylase and histidyl-hydroxylase NO66 (jcdg).